The following is a 93-amino-acid chain: Cobalt transport protein CbiN (93 aa).

A run of 2 helical transmembrane segments spans residues 5-25 (LMLL…NHGG) and 63-83 (LLFT…LGYC).

Belongs to the CbiN family. As to quaternary structure, forms an energy-coupling factor (ECF) transporter complex composed of an ATP-binding protein (A component, CbiO), a transmembrane protein (T component, CbiQ) and 2 possible substrate-capture proteins (S components, CbiM and CbiN) of unknown stoichimetry.

It localises to the cell inner membrane. It functions in the pathway cofactor biosynthesis; adenosylcobalamin biosynthesis. Part of the energy-coupling factor (ECF) transporter complex CbiMNOQ involved in cobalt import. The sequence is that of Cobalt transport protein CbiN from Salmonella newport (strain SL254).